The following is a 216-amino-acid chain: Uracil phosphoribosyltransferase (216 aa).

5-phospho-alpha-D-ribose 1-diphosphate is bound by residues arginine 85, arginine 110, and 135-143 (DPMVATGYS). Uracil-binding positions include isoleucine 200 and 205–207 (GDA). Aspartate 206 is a 5-phospho-alpha-D-ribose 1-diphosphate binding site.

Belongs to the UPRTase family. Mg(2+) is required as a cofactor.

The enzyme catalyses UMP + diphosphate = 5-phospho-alpha-D-ribose 1-diphosphate + uracil. Its pathway is pyrimidine metabolism; UMP biosynthesis via salvage pathway; UMP from uracil: step 1/1. With respect to regulation, allosterically activated by GTP. Functionally, catalyzes the conversion of uracil and 5-phospho-alpha-D-ribose 1-diphosphate (PRPP) to UMP and diphosphate. This Paraburkholderia phytofirmans (strain DSM 17436 / LMG 22146 / PsJN) (Burkholderia phytofirmans) protein is Uracil phosphoribosyltransferase.